A 339-amino-acid polypeptide reads, in one-letter code: Undecaprenyl-phosphate 4-deoxy-4-formamido-L-arabinose transferase (339 aa).

2 consecutive transmembrane segments (helical) span residues 235–255 (LSII…MLIV) and 270–290 (FVLF…MGLL).

The protein belongs to the glycosyltransferase 2 family.

The protein localises to the cell inner membrane. The enzyme catalyses UDP-4-deoxy-4-formamido-beta-L-arabinose + di-trans,octa-cis-undecaprenyl phosphate = 4-deoxy-4-formamido-alpha-L-arabinopyranosyl di-trans,octa-cis-undecaprenyl phosphate + UDP. The protein operates within glycolipid biosynthesis; 4-amino-4-deoxy-alpha-L-arabinose undecaprenyl phosphate biosynthesis; 4-amino-4-deoxy-alpha-L-arabinose undecaprenyl phosphate from UDP-4-deoxy-4-formamido-beta-L-arabinose and undecaprenyl phosphate: step 1/2. It participates in bacterial outer membrane biogenesis; lipopolysaccharide biosynthesis. Its function is as follows. Catalyzes the transfer of 4-deoxy-4-formamido-L-arabinose from UDP to undecaprenyl phosphate. The modified arabinose is attached to lipid A and is required for resistance to polymyxin and cationic antimicrobial peptides. This chain is Undecaprenyl-phosphate 4-deoxy-4-formamido-L-arabinose transferase, found in Pseudomonas fluorescens (strain ATCC BAA-477 / NRRL B-23932 / Pf-5).